The chain runs to 626 residues: Phosphomethylpyrimidine synthase (626 aa).

Residues Asn-237, Met-266, Tyr-295, His-331, 351-353, 392-395, and Glu-431 each bind substrate; these read SRG and DGLR. His-435 is a Zn(2+) binding site. Tyr-458 contacts substrate. His-499 serves as a coordination point for Zn(2+). Residues Cys-579, Cys-582, and Cys-587 each coordinate [4Fe-4S] cluster.

Belongs to the ThiC family. In terms of assembly, homodimer. [4Fe-4S] cluster is required as a cofactor.

It carries out the reaction 5-amino-1-(5-phospho-beta-D-ribosyl)imidazole + S-adenosyl-L-methionine = 4-amino-2-methyl-5-(phosphooxymethyl)pyrimidine + CO + 5'-deoxyadenosine + formate + L-methionine + 3 H(+). It participates in cofactor biosynthesis; thiamine diphosphate biosynthesis. Functionally, catalyzes the synthesis of the hydroxymethylpyrimidine phosphate (HMP-P) moiety of thiamine from aminoimidazole ribotide (AIR) in a radical S-adenosyl-L-methionine (SAM)-dependent reaction. This Cupriavidus pinatubonensis (strain JMP 134 / LMG 1197) (Cupriavidus necator (strain JMP 134)) protein is Phosphomethylpyrimidine synthase.